A 288-amino-acid chain; its full sequence is MAATFFGEVVKAPCRAGTEDEEEEDEGRRETPEDREVRQQLARKREVRLLRRQTKTSLEVSLLEKYPCSKFIIAIGNNAVAFLSSFVMNSGVWEEVGCAKLWNEWCRTTDTIHLSSTEAFCVFYHLKSNPSVFLCQCSCYVAEDQQYQWLEKVFGSCPRKNMQITILTCRHVTDYKTSESTGSLPSPFLKALKTQNFKDPACCPLLEQPNIVHDLPAAVLSYCQVWKIPAILYLCYTDVMKLDLITVEAFKPLLSTRSLKGLVKNIPQSTEILKKLMTTNEIQSNIYT.

Residues 1–37 (MAATFFGEVVKAPCRAGTEDEEEEDEGRRETPEDREV) form a disordered region. A2 carries the N-acetylalanine modification. T18 bears the Phosphothreonine mark. A compositionally biased stretch (basic and acidic residues) spans 26–37 (EGRRETPEDREV). At T54 the chain carries Phosphothreonine. Phosphoserine is present on S180. The residue at position 264 (K264) is an N6-acetyllysine.

Belongs to the PSMG1 family. As to quaternary structure, forms a heterodimer with PSMG2. The PSMG1-PSMG2 heterodimer interacts directly with the PSMA5 and PSMA7 proteasome alpha subunits. Degraded by the proteasome upon completion of 20S proteasome maturation.

It is found in the cytoplasm. The protein resides in the endoplasmic reticulum. Its function is as follows. Chaperone protein which promotes assembly of the 20S proteasome as part of a heterodimer with PSMG2. The PSMG1-PSMG2 heterodimer binds to the PSMA5 and PSMA7 proteasome subunits, promotes assembly of the proteasome alpha subunits into the heteroheptameric alpha ring and prevents alpha ring dimerization. This Callithrix jacchus (White-tufted-ear marmoset) protein is Proteasome assembly chaperone 1 (PSMG1).